A 187-amino-acid polypeptide reads, in one-letter code: Threonylcarbamoyl-AMP synthase (187 aa).

The region spanning 4–187 (TLTLSEAVTA…DARSGHILRL (184 aa)) is the YrdC-like domain.

This sequence belongs to the SUA5 family. TsaC subfamily.

It is found in the cytoplasm. The catalysed reaction is L-threonine + hydrogencarbonate + ATP = L-threonylcarbamoyladenylate + diphosphate + H2O. In terms of biological role, required for the formation of a threonylcarbamoyl group on adenosine at position 37 (t(6)A37) in tRNAs that read codons beginning with adenine. Catalyzes the conversion of L-threonine, HCO(3)(-)/CO(2) and ATP to give threonylcarbamoyl-AMP (TC-AMP) as the acyladenylate intermediate, with the release of diphosphate. This chain is Threonylcarbamoyl-AMP synthase, found in Xylella fastidiosa (strain M23).